The chain runs to 869 residues: Bifunctional uridylyltransferase/uridylyl-removing enzyme (869 aa).

The interval 1–331 (MPTNLPALPM…FPSESQVTRV (331 aa)) is uridylyltransferase. The uridylyl-removing stretch occupies residues 332-688 (INERFVERQG…ARISPAGEGL (357 aa)). Residues 450-572 (VDQHILMVVR…VGDERHLTAL (123 aa)) enclose the HD domain. ACT domains are found at residues 689–773 (QVAV…PSQG) and 800–869 (LLSL…ALEI).

It belongs to the GlnD family. It depends on Mg(2+) as a cofactor.

It catalyses the reaction [protein-PII]-L-tyrosine + UTP = [protein-PII]-uridylyl-L-tyrosine + diphosphate. The enzyme catalyses [protein-PII]-uridylyl-L-tyrosine + H2O = [protein-PII]-L-tyrosine + UMP + H(+). With respect to regulation, uridylyltransferase (UTase) activity is inhibited by glutamine, while glutamine activates uridylyl-removing (UR) activity. Modifies, by uridylylation and deuridylylation, the PII regulatory proteins (GlnB and homologs), in response to the nitrogen status of the cell that GlnD senses through the glutamine level. Under low glutamine levels, catalyzes the conversion of the PII proteins and UTP to PII-UMP and PPi, while under higher glutamine levels, GlnD hydrolyzes PII-UMP to PII and UMP (deuridylylation). Thus, controls uridylylation state and activity of the PII proteins, and plays an important role in the regulation of nitrogen assimilation and metabolism. The polypeptide is Bifunctional uridylyltransferase/uridylyl-removing enzyme (Cupriavidus pinatubonensis (strain JMP 134 / LMG 1197) (Cupriavidus necator (strain JMP 134))).